The chain runs to 202 residues: ATP-dependent Clp protease proteolytic subunit (202 aa).

The active-site Nucleophile is Ser106. His131 is a catalytic residue.

Belongs to the peptidase S14 family. Fourteen ClpP subunits assemble into 2 heptameric rings which stack back to back to give a disk-like structure with a central cavity, resembling the structure of eukaryotic proteasomes.

Its subcellular location is the cytoplasm. The catalysed reaction is Hydrolysis of proteins to small peptides in the presence of ATP and magnesium. alpha-casein is the usual test substrate. In the absence of ATP, only oligopeptides shorter than five residues are hydrolyzed (such as succinyl-Leu-Tyr-|-NHMec, and Leu-Tyr-Leu-|-Tyr-Trp, in which cleavage of the -Tyr-|-Leu- and -Tyr-|-Trp bonds also occurs).. Its function is as follows. Cleaves peptides in various proteins in a process that requires ATP hydrolysis. Has a chymotrypsin-like activity. Plays a major role in the degradation of misfolded proteins. This is ATP-dependent Clp protease proteolytic subunit from Acidovorax ebreus (strain TPSY) (Diaphorobacter sp. (strain TPSY)).